Reading from the N-terminus, the 126-residue chain is Large ribosomal subunit protein eL32 (126 aa).

The protein belongs to the eukaryotic ribosomal protein eL32 family.

This chain is Large ribosomal subunit protein eL32, found in Thermococcus onnurineus (strain NA1).